A 365-amino-acid polypeptide reads, in one-letter code: 3-dehydroquinate synthase (365 aa).

NAD(+)-binding positions include 106-110, 130-131, K142, K151, and 169-172; these read GVIGD, TT, and FFAT. Residues E184, H247, and H264 each contribute to the Zn(2+) site.

Belongs to the sugar phosphate cyclases superfamily. Dehydroquinate synthase family. It depends on Co(2+) as a cofactor. Zn(2+) serves as cofactor. Requires NAD(+) as cofactor.

The protein localises to the cytoplasm. It catalyses the reaction 7-phospho-2-dehydro-3-deoxy-D-arabino-heptonate = 3-dehydroquinate + phosphate. It participates in metabolic intermediate biosynthesis; chorismate biosynthesis; chorismate from D-erythrose 4-phosphate and phosphoenolpyruvate: step 2/7. In terms of biological role, catalyzes the conversion of 3-deoxy-D-arabino-heptulosonate 7-phosphate (DAHP) to dehydroquinate (DHQ). This is 3-dehydroquinate synthase from Listeria welshimeri serovar 6b (strain ATCC 35897 / DSM 20650 / CCUG 15529 / CIP 8149 / NCTC 11857 / SLCC 5334 / V8).